The sequence spans 119 residues: Fluoride-specific ion channel FluC (119 aa).

The next 4 membrane-spanning stretches (helical) occupy residues 5-25, 34-54, 59-79, and 97-117; these read IIPLSIGAALGATARWLLNLA, TGNLFANWTGALLIGIFAETI, WKLLLITGFLGSLTTLSGFSL, and IFLHTAGSLLLTWLGLKIGAA. Glycine 69 and threonine 72 together coordinate Na(+).

This sequence belongs to the fluoride channel Fluc/FEX (TC 1.A.43) family.

It is found in the cell inner membrane. The enzyme catalyses fluoride(in) = fluoride(out). Na(+) is not transported, but it plays an essential structural role and its presence is essential for fluoride channel function. In terms of biological role, fluoride-specific ion channel. Important for reducing fluoride concentration in the cell, thus reducing its toxicity. The sequence is that of Fluoride-specific ion channel FluC from Neisseria meningitidis serogroup C / serotype 2a (strain ATCC 700532 / DSM 15464 / FAM18).